The following is a 157-amino-acid chain: 2-C-methyl-D-erythritol 2,4-cyclodiphosphate synthase (157 aa).

The a divalent metal cation site is built by aspartate 8 and histidine 10. Residues 8 to 10 and 34 to 35 each bind 4-CDP-2-C-methyl-D-erythritol 2-phosphate; these read DVH and HS. An a divalent metal cation-binding site is contributed by histidine 42. 4-CDP-2-C-methyl-D-erythritol 2-phosphate-binding positions include 56–58, 132–135, and arginine 142; these read DIG and TTNE.

This sequence belongs to the IspF family. In terms of assembly, homotrimer. A divalent metal cation is required as a cofactor.

It carries out the reaction 4-CDP-2-C-methyl-D-erythritol 2-phosphate = 2-C-methyl-D-erythritol 2,4-cyclic diphosphate + CMP. It participates in isoprenoid biosynthesis; isopentenyl diphosphate biosynthesis via DXP pathway; isopentenyl diphosphate from 1-deoxy-D-xylulose 5-phosphate: step 4/6. Its function is as follows. Involved in the biosynthesis of isopentenyl diphosphate (IPP) and dimethylallyl diphosphate (DMAPP), two major building blocks of isoprenoid compounds. Catalyzes the conversion of 4-diphosphocytidyl-2-C-methyl-D-erythritol 2-phosphate (CDP-ME2P) to 2-C-methyl-D-erythritol 2,4-cyclodiphosphate (ME-CPP) with a corresponding release of cytidine 5-monophosphate (CMP). In Chlorobium luteolum (strain DSM 273 / BCRC 81028 / 2530) (Pelodictyon luteolum), this protein is 2-C-methyl-D-erythritol 2,4-cyclodiphosphate synthase.